The primary structure comprises 1014 residues: Nebulette (1014 aa).

The tract at residues Met-1–Glu-24 is disordered. Residues Ile-9–Glu-24 show a composition bias toward acidic residues. 23 Nebulin repeats span residues Phe-29–Asp-63, Lys-64–Asn-99, Ser-100–Phe-136, Ser-137–Thr-172, Tyr-173–Asn-205, Lys-206–Asp-241, Lys-242–Asp-278, Pro-279–Gly-313, Met-314–Gly-348, Lys-349–Gly-385, Arg-386–Gly-422, Lys-423–Gly-459, Lys-460–Gly-496, Lys-497–Gly-533, Lys-534–Ser-569, Asn-570–Val-599, Gly-600–Ala-635, Ile-636–Pro-666, Val-667–Gln-693, Arg-694–Thr-728, Leu-729–Gly-759, Arg-760–Gly-794, and Arg-795–Glu-830. Position 96 is an omega-N-methylarginine (Asp-96). The residue at position 795 (Arg-795) is an Omega-N-methylarginine. Residues Gly-836–Ser-953 form a linker region. Residues Pro-954–Asn-1014 enclose the SH3 domain.

In terms of assembly, interacts (via nebulin repeats 1-5) with DESM (via rod region). Interacts (via SH3 domain) with XIRP2. As to quaternary structure, interacts with ZYX/Zyxin. As to expression, abundantly expressed in cardiac muscle, but not in skeletal or smooth muscle. Localized to Z-lines in cardiac cells and to dense bodies in nonmuscle cells. Isoform 2 is expressed in non-muscle cells such as in fibroblasts.

The protein localises to the cytoplasm. Its function is as follows. Binds to actin and plays an important role in the assembly of the Z-disk. May functionally link sarcomeric actin to the desmin intermediate filaments in the heart muscle sarcomeres. May play a role in the assembly of focal adhesions. In Homo sapiens (Human), this protein is Nebulette.